Reading from the N-terminus, the 147-residue chain is Hemoglobin subunit beta-2 (147 aa).

The region spanning 3-147 (EWTDSERAII…VVSALGRQYH (145 aa)) is the Globin domain. Heme b is bound by residues H64 and H93.

This sequence belongs to the globin family. Hb 3 is a heterotetramer of two alpha-2 and two beta-2 chains. As to expression, red blood cells.

Its function is as follows. Involved in oxygen transport from gills to the various peripheral tissues. This is Hemoglobin subunit beta-2 (hbb2) from Boreogadus saida (Polar cod).